We begin with the raw amino-acid sequence, 250 residues long: Golgi SNAP receptor complex member 1 (250 aa).

Ala-2 is modified (N-acetylalanine). Residues 2–229 are Cytoplasmic-facing; that stretch reads AAGTSSYWED…QRINLRKRRD (228 aa). Residues 9–30 adopt a coiled-coil conformation; the sequence is WEDLRKQARQLENELDLKLVSF. The disordered stretch occupies residues 38-59; it reads SHSSTRDGRRDRYSSDTTPLLN. The span at 41–51 shows a compositional bias: basic and acidic residues; that stretch reads STRDGRRDRYS. Positions 68–95 form a coiled coil; sequence ETMAIEIEQLLARLTGVNDKMAEYTNSA. A Phosphoserine modification is found at Ser-141. A helical; Anchor for type IV membrane protein membrane pass occupies residues 230–250; it reads SLILGGVIGICTILLLLYAFH.

This sequence belongs to the GOSR1 family. As to quaternary structure, component of several multiprotein Golgi SNARE complexes. Identified in a SNARE complex with BET1, STX5 and YKT6, in a SNARE complex with BET1L, STX5 and YKT6, in a SNARE complex with STX5, GOSR2, SEC22B and BET1, and in complex with STX5 and COG3. Interacts with GABARAPL2.

It is found in the golgi apparatus membrane. In terms of biological role, involved in transport from the ER to the Golgi apparatus as well as in intra-Golgi transport. It belongs to a super-family of proteins called t-SNAREs or soluble NSF (N-ethylmaleimide-sensitive factor) attachment protein receptor. May play a protective role against hydrogen peroxide induced cytotoxicity under glutathione depleted conditions in neuronal cells by regulating the intracellular ROS levels via inhibition of p38 MAPK (MAPK11, MAPK12, MAPK13 and MAPK14). Participates in docking and fusion stage of ER to cis-Golgi transport. Plays an important physiological role in VLDL-transport vesicle-Golgi fusion and thus in VLDL delivery to the hepatic cis-Golgi. The polypeptide is Golgi SNAP receptor complex member 1 (GOSR1) (Homo sapiens (Human)).